The following is a 335-amino-acid chain: Large ribosomal subunit protein uL10 (335 aa).

Residues 300-335 (QVSEQAAEKKEEKKEEEKKGPSEEEIGGGLSSLFGG) form a disordered region. Residues 305 to 321 (AAEKKEEKKEEEKKGPS) show a composition bias toward basic and acidic residues. The span at 326 to 335 (GGGLSSLFGG) shows a compositional bias: gly residues.

Belongs to the universal ribosomal protein uL10 family. In terms of assembly, part of the 50S ribosomal subunit. Forms part of the ribosomal stalk which helps the ribosome interact with GTP-bound translation factors. Forms a heptameric L10(L12)2(L12)2(L12)2 complex, where L10 forms an elongated spine to which the L12 dimers bind in a sequential fashion.

Forms part of the ribosomal stalk, playing a central role in the interaction of the ribosome with GTP-bound translation factors. In Sulfolobus acidocaldarius (strain ATCC 33909 / DSM 639 / JCM 8929 / NBRC 15157 / NCIMB 11770), this protein is Large ribosomal subunit protein uL10.